The following is an 816-amino-acid chain: Metabotropic glutamate receptor-like protein E (816 aa).

A signal peptide spans 1–27; it reads MKIKIGNILKNVVILVIFSLFISKINS. At 28–436 the chain is on the extracellular side; that stretch reads EVVKPNPAKP…QVVVFDRTLN (409 aa). N-linked (GlcNAc...) asparagine glycans are attached at residues N68, N311, and N388. Residues 437–457 form a helical membrane-spanning segment; sequence IVLGVITGVCVLIVIGIGSVI. Topologically, residues 458-469 are cytoplasmic; the sequence is ALQWRKFRYSSP. The helical transmembrane segment at 470–490 threads the bilayer; it reads LFCMFIIIGALMGLASVFTLL. Topologically, residues 491–496 are extracellular; the sequence is PTPTTP. The helical transmembrane segment at 497 to 517 threads the bilayer; it reads LCSGFPWLLGLGYVIVFGTLF. The Cytoplasmic portion of the chain corresponds to 518 to 541; sequence TKTWRTWRLFSNARKFKIIRITNK. A helical membrane pass occupies residues 542–562; the sequence is FIITLVGGFVLLESIFMIIWT. Topologically, residues 563-590 are extracellular; it reads AVDRPIPLAEPIFKAGEAQLQCTSDSEA. A helical membrane pass occupies residues 591 to 611; that stretch reads WWYVFVFYKVFYILFGVFLAF. Over 612–625 the chain is Cytoplasmic; that stretch reads KTRNVVDSLNESKP. A helical membrane pass occupies residues 626–646; the sequence is ITLALYNLTFVMVVAIALGFI. The Extracellular portion of the chain corresponds to 647–653; sequence LRDNPIA. A helical transmembrane segment spans residues 654-674; it reads IIVIQTIAILLGFTVTVSVLF. The Cytoplasmic segment spans residues 675–816; it reads LPKVWMILSG…KKKKKKNNNK (142 aa). Positions 697–718 are disordered; sequence DSMGRSNGNTTEAESTRGYTNK.

It belongs to the G-protein coupled receptor 3 family.

The protein resides in the membrane. Functionally, may be involved in early development in cAMP sensing and subsequent chemotactic response. Probable receptor of GABA and glutamate, leading respectively to the induction or inhibition of SDF-2 formation. The protein is Metabotropic glutamate receptor-like protein E (grlE) of Dictyostelium discoideum (Social amoeba).